We begin with the raw amino-acid sequence, 246 residues long: O-antigen export system ATP-binding protein RfbB (246 aa).

The 225-residue stretch at 22 to 246 (SGIKDLVFHP…IIELYKQAMA (225 aa)) folds into the ABC transporter domain. 63–70 (GRNGAGKS) contacts ATP.

It belongs to the ABC transporter superfamily.

It localises to the cell inner membrane. In terms of biological role, may form an ATP-driven O-antigen export apparatus, in association with RfbA. This Klebsiella pneumoniae protein is O-antigen export system ATP-binding protein RfbB (rfbB).